Consider the following 392-residue polypeptide: Heat-inducible transcription repressor HrcA (392 aa).

It belongs to the HrcA family.

Its function is as follows. Negative regulator of class I heat shock genes (grpE-dnaK-dnaJ and groELS operons). Prevents heat-shock induction of these operons. In Synechococcus sp. (strain JA-3-3Ab) (Cyanobacteria bacterium Yellowstone A-Prime), this protein is Heat-inducible transcription repressor HrcA.